The primary structure comprises 122 residues: Putative syntaxin 6 (122 aa).

Residues 1 to 100 (MSNYRYSKLN…AKLTHLEDES (100 aa)) lie on the Cytoplasmic side of the membrane. Residues 31-93 (EQIIQEQDDE…DTAMKKMAKL (63 aa)) form the t-SNARE coiled-coil homology domain. The helical; Anchor for type IV membrane protein transmembrane segment at 101 to 121 (SQCKMIMVLSALLFFLVFVLL) threads the bilayer. Position 122 (V122) is a topological domain, extracellular.

It belongs to the syntaxin family.

The protein localises to the membrane. SNARE promoting movement of transport vesicles to target membranes. Potentially functions in retrograde trafficking and in the endocytic recycling pathway. In Caenorhabditis elegans, this protein is Putative syntaxin 6 (syx-6).